The chain runs to 149 residues: Calmodulin (149 aa).

Position 2 is an N-acetylalanine (alanine 2). EF-hand domains are found at residues 8–43 (EQIA…LGQN), 44–79 (PTEA…KMKE), 81–116 (DSEE…LGEK), and 117–149 (LTDD…MVSK). An N6,N6-dimethyllysine modification is found at lysine 14. 14 residues coordinate Ca(2+): aspartate 21, aspartate 23, aspartate 25, threonine 27, glutamate 32, aspartate 57, aspartate 59, asparagine 61, threonine 63, glutamate 68, aspartate 94, aspartate 96, asparagine 98, and glutamate 105. Lysine 116 carries the post-translational modification N6,N6,N6-trimethyllysine. Residues aspartate 130, aspartate 132, aspartate 134, histidine 136, and glutamate 141 each contribute to the Ca(2+) site.

Belongs to the calmodulin family. The pantophobiac mutant CAM2 is undermethylated on Lys-116.

Calmodulin mediates the control of a large number of enzymes, ion channels and other proteins by Ca(2+). Among the enzymes to be stimulated by the calmodulin-Ca(2+) complex are a number of protein kinases and phosphatases. The sequence is that of Calmodulin (CAM) from Paramecium tetraurelia.